Consider the following 322-residue polypeptide: Tlg2p-like protein a (322 aa).

At 1 to 301 the chain is on the cytoplasmic side; sequence MATRNRTLLF…QRHGGMVKCA (301 aa). A coiled-coil region spans residues 116 to 146; sequence KEDQHNIESLTQEITFLLKKSEKQLQRLSAS. One can recognise a t-SNARE coiled-coil homology domain in the interval 226 to 288; the sequence is EEVSVEREKE…EDGLKQLQKA (63 aa). Residues 302–322 form a helical; Anchor for type IV membrane protein membrane-spanning segment; it reads SVLVILCFIMLLLLILKEIFL.

This sequence belongs to the syntaxin family. Interacts with VTI12 and SYP61 to form a t-SNARE complex and with VPS45. Interacts with TNO1. Binds to YKT61 and YKT62. Core constituent of the SNARE complex required for membrane fusion at the trans-Golgi network. As to expression, mostly expressed in flowers, to a lower extent in leaves and roots, and, at low levels, in stems.

It localises to the golgi apparatus. The protein resides in the trans-Golgi network membrane. In terms of biological role, contributes to the regulation of secretory and vacuolar transport pathways in the post-Golgi network, and to the maintenance of the Golgi apparatus and trans-Golgi network (TGN) morphologies. Together with VTI12, required for membrane fusion. Vesicle trafficking protein that functions in the secretory pathway and mediates liposome fusion; the fusion of phospholipid vesicles containing SYP41 and VTI12 is triggered by YKT61 and YKT62. Required for extracellular resistance responses to a fungal pathogen. Also involved in the protection of chloroplasts from salicylic acid-dependent biotic stress. The sequence is that of Tlg2p-like protein a from Arabidopsis thaliana (Mouse-ear cress).